We begin with the raw amino-acid sequence, 183 residues long: MSRIGKLPIHVPAGVTVTIKDNVVTVKGPKGELVQEVNPDINVTLEDGVIHLTRPTDDKNHRALHGLYRSLINNMVVGCSEGYKKELELVGVGYRVSNTGQLLDLSLGYTHNIYLQLPKEVKVETKSERNKNPLIILESADKQLLGQICAKIRSFRMPEPYKGKGIKFVGEEIRRKSGKSAGK.

Belongs to the universal ribosomal protein uL6 family. Part of the 50S ribosomal subunit.

Functionally, this protein binds to the 23S rRNA, and is important in its secondary structure. It is located near the subunit interface in the base of the L7/L12 stalk, and near the tRNA binding site of the peptidyltransferase center. This Parabacteroides distasonis (strain ATCC 8503 / DSM 20701 / CIP 104284 / JCM 5825 / NCTC 11152) protein is Large ribosomal subunit protein uL6.